Reading from the N-terminus, the 534-residue chain is ATP synthase subunit beta 2 (534 aa).

185 to 192 provides a ligand contact to ATP; the sequence is GGAGVGKT. A compositionally biased stretch (basic and acidic residues) spans 494 to 505; sequence AAAREADARREA. A disordered region spans residues 494–534; sequence AAAREADARREAAAAASGAGPGTTSDPASGSAEPQGARHGR.

This sequence belongs to the ATPase alpha/beta chains family. F-type ATPases have 2 components, CF(1) - the catalytic core - and CF(0) - the membrane proton channel. CF(1) has five subunits: alpha(3), beta(3), gamma(1), delta(1), epsilon(1). CF(0) has three main subunits: a(1), b(2) and c(9-12). The alpha and beta chains form an alternating ring which encloses part of the gamma chain. CF(1) is attached to CF(0) by a central stalk formed by the gamma and epsilon chains, while a peripheral stalk is formed by the delta and b chains.

It localises to the cell inner membrane. It carries out the reaction ATP + H2O + 4 H(+)(in) = ADP + phosphate + 5 H(+)(out). Its function is as follows. Produces ATP from ADP in the presence of a proton gradient across the membrane. The catalytic sites are hosted primarily by the beta subunits. The chain is ATP synthase subunit beta 2 from Burkholderia mallei (strain NCTC 10247).